A 270-amino-acid polypeptide reads, in one-letter code: Diaminopimelate epimerase (270 aa).

The substrate site is built by Asn-15, Gln-49, and Asn-66. Cys-75 acts as the Proton donor in catalysis. Residues 76-77, Asn-155, Asn-187, and 204-205 contribute to the substrate site; these read GN and ER. Cys-213 acts as the Proton acceptor in catalysis. Substrate is bound at residue 214 to 215; it reads GS.

This sequence belongs to the diaminopimelate epimerase family. Homodimer.

The protein localises to the cytoplasm. The enzyme catalyses (2S,6S)-2,6-diaminopimelate = meso-2,6-diaminopimelate. Its pathway is amino-acid biosynthesis; L-lysine biosynthesis via DAP pathway; DL-2,6-diaminopimelate from LL-2,6-diaminopimelate: step 1/1. Its function is as follows. Catalyzes the stereoinversion of LL-2,6-diaminopimelate (L,L-DAP) to meso-diaminopimelate (meso-DAP), a precursor of L-lysine and an essential component of the bacterial peptidoglycan. The protein is Diaminopimelate epimerase of Rickettsia felis (strain ATCC VR-1525 / URRWXCal2) (Rickettsia azadi).